The chain runs to 496 residues: DNA-dependent metalloprotease SPRTN (496 aa).

Methionine 1 carries the N-acetylmethionine modification. Residues 45–212 (LQALFLQFND…KTCGGTYIKI (168 aa)) form the SprT-like domain. Histidine 111 is a Zn(2+) binding site. Glutamate 112 is a catalytic residue. Zn(2+) contacts are provided by histidine 115 and histidine 130. Lysine 230 carries the post-translational modification N6-acetyllysine. The SHP-box signature appears at 253-261 (FSGKGYVLG). Phosphoserine is present on serine 268. Lysine 303 is covalently cross-linked (Glycyl lysine isopeptide (Lys-Gly) (interchain with G-Cter in SUMO2)). The short motif at 326–333 (QSVLSSYF) is the PIP-box element. Lysine 342 is covalently cross-linked (Glycyl lysine isopeptide (Lys-Gly) (interchain with G-Cter in SUMO2); alternate). Lysine 342 is covalently cross-linked (Glycyl lysine isopeptide (Lys-Gly) (interchain with G-Cter in ubiquitin); alternate). A disordered region spans residues 346–459 (NVNGSPVKSG…STPRSSGGQR (114 aa)). Residue lysine 361 forms a Glycyl lysine isopeptide (Lys-Gly) (interchain with G-Cter in SUMO2) linkage. Residues 382 to 403 (SSKVTAPASATVTSAAGTSAAI) are compositionally biased toward low complexity. Serine 383 bears the Phosphoserine mark. A Nuclear localization signal motif is present at residues 412-423 (DQFLNKRPRLED). 2 stretches are compositionally biased toward polar residues: residues 426-437 (ALNNIKEQTQSG) and 445-457 (RPTAISTPRSSGG). Lysine 431 is covalently cross-linked (Glycyl lysine isopeptide (Lys-Gly) (interchain with G-Cter in SUMO2)). The UBZ4-type zinc finger occupies 461-488 (LVNCPVCQGVVLESQINEHLDRCLEGSK). Residues cysteine 464, cysteine 467, histidine 479, and cysteine 483 each contribute to the Zn(2+) site.

It belongs to the Spartan family. As to quaternary structure, homodimer. Interacts (VIA PIP-box) with PCNA (when ubiquitinated). Interacts (via its SHP-box) with VCP/p97. Interacts with RAD18. Interacts with KCTD13 and POLD3. Requires Zn(2+) as cofactor. Post-translationally, autocatalytically cleaved in response to double-stranded DNA-binding: autocatalytic cleavage takes place in trans and leads to inactivation. Monoubiquitinated; monoubiquitination promotes exclusion from chromatin. Deubiquitinated by VCPIP1: deubiquitination is required for subsequent acetylation and recruitment to chromatin and DNA damage sites. In terms of processing, acetylated following deubiquitination by VCPIP1, leading to recruitment to chromatin and DNA damage sites. Post-translationally, phosphorylation by CHEK1 promotes recruitment to chromatin.

It localises to the nucleus. Its subcellular location is the chromosome. DNA-binding activates the protease activity: single-stranded DNA-binding specifically activates ability to cleave covalent DNA-protein cross-links (DPCs). In contrast, double-stranded DNA-binding specifically activates autocatalytic cleavage, and subsequent inactivation. In terms of biological role, DNA-dependent metalloendopeptidase that mediates the proteolytic cleavage of covalent DNA-protein cross-links (DPCs) during DNA synthesis, thereby playing a key role in maintaining genomic integrity. DPCs are highly toxic DNA lesions that interfere with essential chromatin transactions, such as replication and transcription, and which are induced by reactive agents, such as UV light or formaldehyde. Associates with the DNA replication machinery and specifically removes DPCs during DNA synthesis. Catalyzes proteolytic cleavage of the HMCES DNA-protein cross-link following unfolding by the BRIP1/FANCJ helicase. Acts as a pleiotropic protease for DNA-binding proteins cross-linked with DNA, such as TOP1, TOP2A, histones H3 and H4. Mediates degradation of DPCs that are not ubiquitinated, while it is not able to degrade ubiquitinated DPCs. SPRTN activation requires polymerase collision with DPCs followed by helicase bypass of DPCs. Involved in recruitment of VCP/p97 to sites of DNA damage. Also acts as an activator of CHEK1 during normal DNA replication by mediating proteolytic cleavage of CHEK1, thereby promoting CHEK1 removal from chromatin and subsequent activation. Does not activate CHEK1 in response to DNA damage. May also act as a 'reader' of ubiquitinated PCNA: recruited to sites of UV damage and interacts with ubiquitinated PCNA and RAD18, the E3 ubiquitin ligase that monoubiquitinates PCNA. Facilitates chromatin association of RAD18 and is required for efficient PCNA monoubiquitination, promoting a feed-forward loop to enhance PCNA ubiquitination and translesion DNA synthesis. This is DNA-dependent metalloprotease SPRTN from Rattus norvegicus (Rat).